We begin with the raw amino-acid sequence, 520 residues long: Maturase K (520 aa).

This sequence belongs to the intron maturase 2 family. MatK subfamily.

The protein localises to the plastid. It is found in the chloroplast. Usually encoded in the trnK tRNA gene intron. Probably assists in splicing its own and other chloroplast group II introns. The polypeptide is Maturase K (Linum perenne (Perennial flax)).